Consider the following 94-residue polypeptide: Copper resistance protein K (94 aa).

The N-terminal stretch at Met1 to Ala20 is a signal peptide.

In terms of assembly, monomer in the copper-bound form. Homodimer as apoprotein. Dissociates into monomers upon copper binding.

Its subcellular location is the periplasm. Its function is as follows. Involved in resistance to copper. Can bind up to 2 copper ions. Has higher affinity for Cu(+) than for Cu(2+). The protein is Copper resistance protein K (copK) of Cupriavidus metallidurans (strain ATCC 43123 / DSM 2839 / NBRC 102507 / CH34) (Ralstonia metallidurans).